The chain runs to 317 residues: Methionyl-tRNA formyltransferase (317 aa).

110–113 lines the (6S)-5,6,7,8-tetrahydrofolate pocket; it reads SLLP. Positions 292 to 317 are disordered; the sequence is RMKGEDFVRGKNVQPGDVLGEANEEN.

Belongs to the Fmt family.

The enzyme catalyses L-methionyl-tRNA(fMet) + (6R)-10-formyltetrahydrofolate = N-formyl-L-methionyl-tRNA(fMet) + (6S)-5,6,7,8-tetrahydrofolate + H(+). Its function is as follows. Attaches a formyl group to the free amino group of methionyl-tRNA(fMet). The formyl group appears to play a dual role in the initiator identity of N-formylmethionyl-tRNA by promoting its recognition by IF2 and preventing the misappropriation of this tRNA by the elongation apparatus. This is Methionyl-tRNA formyltransferase from Bacillus velezensis (strain DSM 23117 / BGSC 10A6 / LMG 26770 / FZB42) (Bacillus amyloliquefaciens subsp. plantarum).